The following is a 190-amino-acid chain: Selenoprotein S (190 aa).

The chain crosses the membrane as a helical span at residues 28–48; the sequence is SLLASYGWYILFSCILLYIVI. Residues 78–90 are VCP/p97-interacting motif (VIM); that stretch reads RQEALAAARLRMQ. A disordered region spans residues 115 to 190; it reads KIEMWDSMQE…RRGPSSGGUN (76 aa). Residues 160-174 are compositionally biased toward gly residues; it reads RGGGYNPLTGEGGGT. Position 189 (U189) is a non-standard amino acid, selenocysteine.

The protein belongs to the selenoprotein S family. In terms of assembly, interacts with DERL1 and (via VIM motif) with VCP, suggesting that it forms a membrane complex with DERL1 that serves as a receptor for VCP. Also interacts with DERL2, DERL3 and SELENOK. The SELENOK-SELENOS complex interacts with VCP. Interacts with CCDC47. In terms of processing, truncated SELENOS proteins produced by failed UGA/Sec decoding are ubiquitinated by the CRL2(KLHDC2) and CRL2(KLHDC3) complexes, which recognizes the glycine (Gly) at the C-terminus of truncated SELENOS proteins. Truncated SELENOS proteins produced by failed UGA/Sec decoding are also ubiquitinated by the CRL5(KLHDC1) complex.

It localises to the endoplasmic reticulum membrane. It is found in the cytoplasm. Involved in the degradation process of misfolded endoplasmic reticulum (ER) luminal proteins. Participates in the transfer of misfolded proteins from the ER to the cytosol, where they are destroyed by the proteasome in a ubiquitin-dependent manner. Probably acts by serving as a linker between DERL1, which mediates the retrotranslocation of misfolded proteins into the cytosol, and the ATPase complex VCP, which mediates the translocation and ubiquitination. This chain is Selenoprotein S, found in Mus musculus (Mouse).